A 608-amino-acid polypeptide reads, in one-letter code: RAS guanyl-releasing protein 2 (608 aa).

One can recognise an N-terminal Ras-GEF domain in the interval 4-126; it reads TLDLDKGCTV…SLIDIESVPT (123 aa). Phosphoserine is present on residues Ser-116, Ser-117, and Ser-147. The Ras-GEF domain maps to 154 to 387; it reads EPMELAEHLT…YQLSLQREPR (234 aa). The segment at 382-405 is disordered; it reads LQREPRSKSSPTSPTSCTPPPRPP. 2 EF-hand domains span residues 426–461 and 463–490; these read HIEKMVESVFRNFDVDGDGHISQEEFQIIRGNFPYL and AFGDLDQNQDGCISREEMISYFLRSSSV. 10 residues coordinate Ca(2+): Asp-439, Asp-441, Asp-443, His-445, Glu-450, Asp-468, Asn-470, Asp-472, Cys-474, and Glu-479. Residues 498–548 form a Phorbol-ester/DAG-type zinc finger; that stretch reads VHNLQESNSLRPVACRHCKALILGIYKQGLKCRACGVNCHKQCKDRLSVEC. Phosphoserine is present on residues Ser-554 and Ser-575. Residues 555 to 596 are disordered; sequence VSLEGSAPSPSPTHTHHRAFSFSLPRPGRRSSRPPEIREEEV.

The protein belongs to the RASGRP family. In terms of assembly, forms a signaling complex with RAP1 and BRAF. Interacts with F-actin. Interacts with RAP1. As to expression, expressed in striatal neurons (at protein level). Expressed in the hematopoietic system. Detected in olfactory structures and deep cortical layers of brain.

It is found in the cytoplasm. It localises to the cytosol. Its subcellular location is the cell membrane. The protein localises to the synapse. The protein resides in the synaptosome. It is found in the cell projection. It localises to the ruffle membrane. In terms of biological role, functions as a calcium- and DAG-regulated nucleotide exchange factor specifically activating Rap through the exchange of bound GDP for GTP. May also activate other GTPases such as RRAS, RRAS2, NRAS, KRAS but not HRAS. Functions in aggregation of platelets and adhesion of T-lymphocytes and neutrophils probably through inside-out integrin activation. May function in the muscarinic acetylcholine receptor M1/CHRM1 signaling pathway. The polypeptide is RAS guanyl-releasing protein 2 (Rasgrp2) (Rattus norvegicus (Rat)).